We begin with the raw amino-acid sequence, 201 residues long: UPF0301 protein CE2927 (201 aa).

It belongs to the UPF0301 (AlgH) family.

This is UPF0301 protein CE2927 from Corynebacterium efficiens (strain DSM 44549 / YS-314 / AJ 12310 / JCM 11189 / NBRC 100395).